The chain runs to 545 residues: uncharacterized protein (545 aa).

Composition is skewed to basic and acidic residues over residues 34–44 and 53–63; these read PMNKQNEKLKT and PRNDYSRRVSR. Disordered regions lie at residues 34–98, 269–296, and 415–444; these read PMNK…PESN, QNGT…PQDS, and ERPQ…SAPE. Residues 69 to 78 are compositionally biased toward polar residues; that stretch reads TDSSEQQITA. Basic and acidic residues predominate over residues 415–428; that stretch reads ERPQRKTEHVKTPE. Positions 429–441 are enriched in polar residues; it reads ENLQTKNPTTMTS.

This is an uncharacterized protein from Mus musculus (Mouse).